A 295-amino-acid chain; its full sequence is Ribosomal protein L11 methyltransferase (295 aa).

4 residues coordinate S-adenosyl-L-methionine: Thr-145, Gly-166, Asp-188, and Asn-230.

It belongs to the methyltransferase superfamily. PrmA family.

It localises to the cytoplasm. It catalyses the reaction L-lysyl-[protein] + 3 S-adenosyl-L-methionine = N(6),N(6),N(6)-trimethyl-L-lysyl-[protein] + 3 S-adenosyl-L-homocysteine + 3 H(+). Its function is as follows. Methylates ribosomal protein L11. In Shewanella amazonensis (strain ATCC BAA-1098 / SB2B), this protein is Ribosomal protein L11 methyltransferase.